The primary structure comprises 141 residues: Nucleoside diphosphate kinase (141 aa).

Residues Lys11, Phe59, Arg87, Thr93, Arg104, and Asn114 each contribute to the ATP site. His117 (pros-phosphohistidine intermediate) is an active-site residue.

It belongs to the NDK family. In terms of assembly, homotetramer. Mg(2+) serves as cofactor.

Its subcellular location is the cytoplasm. The catalysed reaction is a 2'-deoxyribonucleoside 5'-diphosphate + ATP = a 2'-deoxyribonucleoside 5'-triphosphate + ADP. It catalyses the reaction a ribonucleoside 5'-diphosphate + ATP = a ribonucleoside 5'-triphosphate + ADP. Functionally, major role in the synthesis of nucleoside triphosphates other than ATP. The ATP gamma phosphate is transferred to the NDP beta phosphate via a ping-pong mechanism, using a phosphorylated active-site intermediate. The polypeptide is Nucleoside diphosphate kinase (Acidovorax ebreus (strain TPSY) (Diaphorobacter sp. (strain TPSY))).